The following is a 305-amino-acid chain: Homoserine kinase (305 aa).

An ATP-binding site is contributed by 90-100 (PLARGLGSSAS).

The protein belongs to the GHMP kinase family. Homoserine kinase subfamily.

The protein resides in the cytoplasm. It carries out the reaction L-homoserine + ATP = O-phospho-L-homoserine + ADP + H(+). It participates in amino-acid biosynthesis; L-threonine biosynthesis; L-threonine from L-aspartate: step 4/5. In terms of biological role, catalyzes the ATP-dependent phosphorylation of L-homoserine to L-homoserine phosphate. The sequence is that of Homoserine kinase from Staphylococcus haemolyticus (strain JCSC1435).